Here is a 146-residue protein sequence, read N- to C-terminus: Hemoglobin subunit beta (146 aa).

Residue A1 is modified to N-acetylalanine. The Globin domain maps to 2–146 (SFDPHEKQLI…VAAALAAEYH (145 aa)). The heme b site is built by H63 and H92.

The protein belongs to the globin family. In terms of assembly, heterotetramer of two alpha chains and two beta chains. In terms of tissue distribution, red blood cells.

Involved in oxygen transport from the lung to the various peripheral tissues. This Crocodylus niloticus (Nile crocodile) protein is Hemoglobin subunit beta (HBB).